The following is a 510-amino-acid chain: Ectonucleoside triphosphate diphosphohydrolase 1 (510 aa).

Residues methionine 1–asparagine 16 lie on the Cytoplasmic side of the membrane. Residues isoleucine 17 to leucine 37 traverse the membrane as a helical segment. The Extracellular portion of the chain corresponds to threonine 38–isoleucine 478. Asparagine 73 is a glycosylation site (N-linked (GlcNAc...) asparagine). Cysteine 84 and cysteine 108 are joined by a disulfide. Glutamate 174 functions as the Proton acceptor in the catalytic mechanism. Residues asparagine 226, asparagine 291, and asparagine 333 are each glycosylated (N-linked (GlcNAc...) asparagine). Disulfide bonds link cysteine 254/cysteine 300 and cysteine 281/cysteine 324. 2 cysteine pairs are disulfide-bonded: cysteine 337–cysteine 342 and cysteine 391–cysteine 414. N-linked (GlcNAc...) asparagine glycosylation is found at asparagine 428 and asparagine 457. The helical transmembrane segment at glycine 479–tyrosine 499 threads the bilayer. The Cytoplasmic segment spans residues serine 500–valine 510.

This sequence belongs to the GDA1/CD39 NTPase family. In terms of assembly, homodimer; disulfide-linked. It depends on Ca(2+) as a cofactor. The cofactor is Mg(2+). Post-translationally, N-glycosylated. The N-terminus is blocked. In terms of processing, palmitoylated on Cys-13; which is required for caveola targeting.

The protein localises to the membrane. It localises to the caveola. The enzyme catalyses a ribonucleoside 5'-triphosphate + 2 H2O = a ribonucleoside 5'-phosphate + 2 phosphate + 2 H(+). It carries out the reaction a ribonucleoside 5'-triphosphate + H2O = a ribonucleoside 5'-diphosphate + phosphate + H(+). The catalysed reaction is a ribonucleoside 5'-diphosphate + H2O = a ribonucleoside 5'-phosphate + phosphate + H(+). It catalyses the reaction ATP + 2 H2O = AMP + 2 phosphate + 2 H(+). The enzyme catalyses ATP + H2O = ADP + phosphate + H(+). It carries out the reaction ADP + H2O = AMP + phosphate + H(+). The catalysed reaction is CTP + 2 H2O = CMP + 2 phosphate + 2 H(+). It catalyses the reaction CTP + H2O = CDP + phosphate + H(+). The enzyme catalyses CDP + H2O = CMP + phosphate + H(+). It carries out the reaction GTP + 2 H2O = GMP + 2 phosphate + 2 H(+). The catalysed reaction is GTP + H2O = GDP + phosphate + H(+). It catalyses the reaction GDP + H2O = GMP + phosphate + H(+). The enzyme catalyses ITP + 2 H2O = IMP + 2 phosphate + 2 H(+). It carries out the reaction ITP + H2O = IDP + phosphate + H(+). The catalysed reaction is IDP + H2O = IMP + phosphate + H(+). It catalyses the reaction UTP + 2 H2O = UMP + 2 phosphate + 2 H(+). The enzyme catalyses UTP + H2O = UDP + phosphate + H(+). It carries out the reaction UDP + H2O = UMP + phosphate + H(+). In terms of biological role, catalyzes the hydrolysis of both di- and triphosphate nucleotides (NDPs and NTPs) and hydrolyze NTPs to nucleotide monophosphates (NMPs) in two distinct successive phosphate-releasing steps, with NDPs as intermediates and participates in the regulation of extracellular levels of nucleotides. By hydrolyzing proinflammatory ATP and platelet-activating ADP to AMP, it blocks platelet aggregation and supports blood flow. The sequence is that of Ectonucleoside triphosphate diphosphohydrolase 1 from Mus musculus (Mouse).